Consider the following 364-residue polypeptide: Methylthioribose-1-phosphate isomerase (364 aa).

Substrate-binding positions include 51–53 (RGA), Arg88, and Gln199. Asp240 serves as the catalytic Proton donor. 250-251 (NK) is a substrate binding site.

This sequence belongs to the eIF-2B alpha/beta/delta subunits family. MtnA subfamily.

It catalyses the reaction 5-(methylsulfanyl)-alpha-D-ribose 1-phosphate = 5-(methylsulfanyl)-D-ribulose 1-phosphate. Its pathway is amino-acid biosynthesis; L-methionine biosynthesis via salvage pathway; L-methionine from S-methyl-5-thio-alpha-D-ribose 1-phosphate: step 1/6. Functionally, catalyzes the interconversion of methylthioribose-1-phosphate (MTR-1-P) into methylthioribulose-1-phosphate (MTRu-1-P). The chain is Methylthioribose-1-phosphate isomerase from Cereibacter sphaeroides (strain KD131 / KCTC 12085) (Rhodobacter sphaeroides).